The following is a 243-amino-acid chain: Transmembrane protein 174 (243 aa).

A run of 2 helical transmembrane segments spans residues 40–60 and 73–93; these read LLFSGIFLGLVGITFTVMGWI and LLGPVLLSVGVTFILIAVCKF.

In terms of assembly, interacts with SLC34A1; regulates SLC34A1 internalization by PTH and FGF23. Predominantly expressed in kidney. Selectively localized in the apical membrane of renal proximal tubule epithelial cells.

The protein resides in the endoplasmic reticulum membrane. Its subcellular location is the apical cell membrane. Functionally, regulator of plasma phosphate homeostasis. Decreases serum inorganic phosphate (Pi) uptake by regulating the sodium-phosphate cotransporter SLC34A1 trafficking by PTH and FGF23 in the kidney. The sequence is that of Transmembrane protein 174 (TMEM174) from Homo sapiens (Human).